Here is a 214-residue protein sequence, read N- to C-terminus: NADH-quinone oxidoreductase subunit C (214 aa).

Belongs to the complex I 30 kDa subunit family. NDH-1 is composed of 14 different subunits. Subunits NuoB, C, D, E, F, and G constitute the peripheral sector of the complex.

The protein localises to the cell inner membrane. It catalyses the reaction a quinone + NADH + 5 H(+)(in) = a quinol + NAD(+) + 4 H(+)(out). NDH-1 shuttles electrons from NADH, via FMN and iron-sulfur (Fe-S) centers, to quinones in the respiratory chain. The immediate electron acceptor for the enzyme in this species is believed to be ubiquinone. Couples the redox reaction to proton translocation (for every two electrons transferred, four hydrogen ions are translocated across the cytoplasmic membrane), and thus conserves the redox energy in a proton gradient. In Francisella tularensis subsp. holarctica (strain LVS), this protein is NADH-quinone oxidoreductase subunit C.